The chain runs to 80 residues: Large ribosomal subunit protein uL24 (80 aa).

Positions 53–80 (HMRPTQGQTQGSIIEREFPIHSSNVKKS) are disordered.

The protein belongs to the universal ribosomal protein uL24 family. Part of the 50S ribosomal subunit.

Its function is as follows. One of two assembly initiator proteins, it binds directly to the 5'-end of the 23S rRNA, where it nucleates assembly of the 50S subunit. In terms of biological role, one of the proteins that surrounds the polypeptide exit tunnel on the outside of the subunit. This Pelodictyon phaeoclathratiforme (strain DSM 5477 / BU-1) protein is Large ribosomal subunit protein uL24.